The primary structure comprises 678 residues: MATASLDALQAAYVDFSEITLREKVGHGSYGVVCKAVWRDKLVAVKEFFASAEQKDIEKEVKQLSRVKHPNIIALHGISSYQQATYLIMEFAEGGSLHNFLHGKVKPAYSLAHAMSWARQCAEGLAYLHAMTPKPLIHRDVKPLNLLLTNKGRNLKICDFGTVADKSTMMTNNRGSAAWMAPEVFEGSKYTEKCDIFSWAIVLWEVLSRKQPFKGIDNAYTIQWKIYKGERPPLLTTCPKRIEDLMTACWKTVPEDRPSMQYIVGVMHEIVKDYTGADKALEYTFVNQQIVTKESDGTVAAQPDSLSSQEGELSPSSTQLTPTTAANANVNAIAISKTTTSSMTENTSSTSSDITPTNSGQLDNNPLFYMVTNRWDAIPEEESNESRNDSFNLTSSAEATQRLETIRNGMILMACKPMEQLTLDVEANGFDLSPSESSSSSTNAKSDGRERLTVTDTKPVMMTTDLSNNNGGIHAHSNGLLSHANGWQARDEELQEQEHEQEIVNSLDVDVDPDEDENDGTEQSLAEILDPELQPEPPIPNDAESQLIYRDHRHMAKEYLSVDTNLYYAQDFKDKLIVQMDRTEREQKQELLRKMKDKEGLQSLYNNLQQQYASRQLAAGHHPQPHPHPHPNQLQHPHSHPPMHFLQDEGCGLLPGSVCGGSESVEEGWVVIPPHHNA.

The region spanning 19–271 is the Protein kinase domain; it reads ITLREKVGHG…YIVGVMHEIV (253 aa). Residues 25–33 and Lys-46 contribute to the ATP site; that span reads VGHGSYGVV. Asp-140 serves as the catalytic Proton acceptor. 4 disordered regions span residues 296 to 322, 339 to 365, 431 to 455, and 616 to 647; these read DGTV…QLTP, TTSS…LDNN, DLSP…LTVT, and QLAA…HFLQ. Low complexity-rich tracts occupy residues 313–322 and 339–352; these read LSPSSTQLTP and TTSS…STSS. A compositionally biased stretch (polar residues) spans 353–364; that stretch reads DITPTNSGQLDN.

It belongs to the protein kinase superfamily. STE Ser/Thr protein kinase family. MAP kinase kinase kinase subfamily. The cofactor is Mg(2+).

It carries out the reaction L-seryl-[protein] + ATP = O-phospho-L-seryl-[protein] + ADP + H(+). It catalyses the reaction L-threonyl-[protein] + ATP = O-phospho-L-threonyl-[protein] + ADP + H(+). Functionally, component of a protein kinase signal transduction cascade. Mediator of TGF-beta signal transduction. Responsible for activation of the JNK MAPK pathway (basket, bsk and hemipterous, hep) in response to LPS. Component of the NF-kappa-B pathway; relish-mediated JNK inhibition involves proteasomal degradation of Tak1; certain targets of Relish that are induced during immune responses may facilitate destruction of Tak1 and switch off the JNK cascade. Participates in diverse roles such as control of cell shape and regulation of apoptosis. The polypeptide is Mitogen-activated protein kinase kinase kinase 7 (Tak1) (Drosophila melanogaster (Fruit fly)).